A 37-amino-acid chain; its full sequence is Large ribosomal subunit protein bL36c (37 aa).

Belongs to the bacterial ribosomal protein bL36 family.

Its subcellular location is the plastid. The protein localises to the chloroplast. This Adiantum capillus-veneris (Maidenhair fern) protein is Large ribosomal subunit protein bL36c.